The sequence spans 361 residues: Rho-GTPase-activating protein 5 (361 aa).

The 194-residue stretch at 52-245 folds into the Rho-GAP domain; the sequence is IFLTRRDGEK…FLINHQGSFI (194 aa). Low complexity predominate over residues 306 to 323; sequence SSATYSNSPSSNFSNMKS. The segment at 306-345 is disordered; the sequence is SSATYSNSPSSNFSNMKSSEVDPGSPPRIKSRSYSLSRSS.

It localises to the membrane. Functionally, GTPase-activating protein for Rho1. Has a role in the negative regulation of (1-3)beta-D-glucan synthase activity and cell integrity. The chain is Rho-GTPase-activating protein 5 (rga5) from Schizosaccharomyces pombe (strain 972 / ATCC 24843) (Fission yeast).